Reading from the N-terminus, the 467-residue chain is Fumarate hydratase class II (467 aa).

Residues S98–T100, R126, H129–D132, S139–N141, and T187 contribute to the substrate site. The active-site Proton donor/acceptor is H188. Residue S318 is part of the active site. Substrate is bound by residues S319 and K324–N326.

It belongs to the class-II fumarase/aspartase family. Fumarase subfamily. In terms of assembly, homotetramer.

The protein localises to the cytoplasm. It carries out the reaction (S)-malate = fumarate + H2O. It functions in the pathway carbohydrate metabolism; tricarboxylic acid cycle; (S)-malate from fumarate: step 1/1. In terms of biological role, involved in the TCA cycle. Catalyzes the stereospecific interconversion of fumarate to L-malate. In Escherichia coli O157:H7, this protein is Fumarate hydratase class II.